A 547-amino-acid chain; its full sequence is Chaperonin GroEL (547 aa).

ATP-binding positions include 29–32 (TLGP), Lys50, 86–90 (DGTTT), Gly414, 478–480 (NAA), and Asp494.

The protein belongs to the chaperonin (HSP60) family. In terms of assembly, forms a cylinder of 14 subunits composed of two heptameric rings stacked back-to-back. Interacts with the co-chaperonin GroES.

It is found in the cytoplasm. The enzyme catalyses ATP + H2O + a folded polypeptide = ADP + phosphate + an unfolded polypeptide.. Its function is as follows. Together with its co-chaperonin GroES, plays an essential role in assisting protein folding. The GroEL-GroES system forms a nano-cage that allows encapsulation of the non-native substrate proteins and provides a physical environment optimized to promote and accelerate protein folding. The polypeptide is Chaperonin GroEL (Saccharophagus degradans (strain 2-40 / ATCC 43961 / DSM 17024)).